Here is a 101-residue protein sequence, read N- to C-terminus: MRTYEVMYIIRPNIEEDAKKAVVERFNGILASHGSEVLEAKDWGKRRLAYEINDFSEGYYNIVRIQTADNEATDEFQRLAKISDDVIRYIVIREDEDKTRK.

It belongs to the bacterial ribosomal protein bS6 family.

Binds together with bS18 to 16S ribosomal RNA. The polypeptide is Small ribosomal subunit protein bS6 (Staphylococcus saprophyticus subsp. saprophyticus (strain ATCC 15305 / DSM 20229 / NCIMB 8711 / NCTC 7292 / S-41)).